A 286-amino-acid polypeptide reads, in one-letter code: 4-hydroxybenzoate octaprenyltransferase (286 aa).

The next 7 helical transmembrane spans lie at 22–42, 45–65, 98–118, 143–163, 213–233, 238–255, and 266–286; these read IGTL…EKAM, LSVL…GCVI, LFIV…LYTI, FFLG…TIEA, IIAL…YLSQ, YFIV…QCRL, and NAFL…LFGI.

This sequence belongs to the UbiA prenyltransferase family. Mg(2+) is required as a cofactor.

It localises to the cell inner membrane. The catalysed reaction is all-trans-octaprenyl diphosphate + 4-hydroxybenzoate = 4-hydroxy-3-(all-trans-octaprenyl)benzoate + diphosphate. Its pathway is cofactor biosynthesis; ubiquinone biosynthesis. Functionally, catalyzes the prenylation of para-hydroxybenzoate (PHB) with an all-trans polyprenyl group. Mediates the second step in the final reaction sequence of ubiquinone-8 (UQ-8) biosynthesis, which is the condensation of the polyisoprenoid side chain with PHB, generating the first membrane-bound Q intermediate 3-octaprenyl-4-hydroxybenzoate. The sequence is that of 4-hydroxybenzoate octaprenyltransferase from Histophilus somni (strain 2336) (Haemophilus somnus).